Here is a 953-residue protein sequence, read N- to C-terminus: Zinc finger protein 507 (953 aa).

Ser-95 is modified (phosphoserine). 3 C2H2-type zinc fingers span residues 125-147, 155-185, and 248-270; these read YQCSLCKFLSSSFSVLKDHIKQH, LMCSECHITSRSQEELEAHVVNDHDNDANIH, and YRCLFCSYTCGQQRMLKTHAWKH. Residue Ser-427 is modified to Phosphoserine. Positions 470–489 are disordered; that stretch reads KGLATDENAPPGRRRTNSES. 5 consecutive C2H2-type zinc fingers follow at residues 641–663, 669–691, 697–720, 758–780, and 786–808; these read YRCRLCHYTSGNKGYIKQHLRVH, YQCPICEHIADNSKDLESHMIHH, YQCKQCEESFHYKSQLRNHEREQH, YRCDVCDYTSTTYVGVRNHRRIH, and YRCSLCGYVCSHPPSLKSHMWKH. The segment at 831-888 is disordered; that stretch reads GRVLGKSPGKTQLKSSEESADPVTGSSENAVSSSELMSQTPSEVLGTNENEKLSPTSN. Residues 854 to 888 show a composition bias toward polar residues; sequence TGSSENAVSSSELMSQTPSEVLGTNENEKLSPTSN. The C2H2-type 9 zinc-finger motif lies at 911 to 933; the sequence is FCCCICGFESTSKENLLDHMKEH.

Belongs to the krueppel C2H2-type zinc-finger protein family.

Its subcellular location is the nucleus. Its function is as follows. May be involved in transcriptional regulation. This Homo sapiens (Human) protein is Zinc finger protein 507 (ZNF507).